The primary structure comprises 397 residues: Phosphoglycerate kinase (397 aa).

Residues 21–23 (DFN), arginine 36, 59–62 (HCGR), arginine 118, and arginine 151 contribute to the substrate site. Residues lysine 201, glutamate 323, and 353–356 (GGDT) each bind ATP.

This sequence belongs to the phosphoglycerate kinase family. Monomer.

The protein localises to the cytoplasm. It carries out the reaction (2R)-3-phosphoglycerate + ATP = (2R)-3-phospho-glyceroyl phosphate + ADP. It functions in the pathway carbohydrate degradation; glycolysis; pyruvate from D-glyceraldehyde 3-phosphate: step 2/5. This Bartonella tribocorum (strain CIP 105476 / IBS 506) protein is Phosphoglycerate kinase.